A 285-amino-acid chain; its full sequence is 2-dehydro-3-deoxyphosphooctonate aldolase (285 aa).

Belongs to the KdsA family.

Its subcellular location is the cytoplasm. The catalysed reaction is D-arabinose 5-phosphate + phosphoenolpyruvate + H2O = 3-deoxy-alpha-D-manno-2-octulosonate-8-phosphate + phosphate. Its pathway is carbohydrate biosynthesis; 3-deoxy-D-manno-octulosonate biosynthesis; 3-deoxy-D-manno-octulosonate from D-ribulose 5-phosphate: step 2/3. The protein operates within bacterial outer membrane biogenesis; lipopolysaccharide biosynthesis. This chain is 2-dehydro-3-deoxyphosphooctonate aldolase, found in Bordetella parapertussis (strain 12822 / ATCC BAA-587 / NCTC 13253).